Here is a 331-residue protein sequence, read N- to C-terminus: tRNA-cytidine(32) 2-sulfurtransferase (331 aa).

Residues 1 to 33 (MNAPHMNDTAADAATLDDAAAPAGRPALTRREQ) form a disordered region. A compositionally biased stretch (low complexity) spans 8–23 (DTAADAATLDDAAAPA). Positions 71 to 76 (SGGKDS) match the PP-loop motif motif. [4Fe-4S] cluster contacts are provided by cysteine 146, cysteine 149, and cysteine 237.

Belongs to the TtcA family. As to quaternary structure, homodimer. Mg(2+) serves as cofactor. Requires [4Fe-4S] cluster as cofactor.

The protein resides in the cytoplasm. The enzyme catalyses cytidine(32) in tRNA + S-sulfanyl-L-cysteinyl-[cysteine desulfurase] + AH2 + ATP = 2-thiocytidine(32) in tRNA + L-cysteinyl-[cysteine desulfurase] + A + AMP + diphosphate + H(+). The protein operates within tRNA modification. In terms of biological role, catalyzes the ATP-dependent 2-thiolation of cytidine in position 32 of tRNA, to form 2-thiocytidine (s(2)C32). The sulfur atoms are provided by the cysteine/cysteine desulfurase (IscS) system. The protein is tRNA-cytidine(32) 2-sulfurtransferase of Burkholderia orbicola (strain MC0-3).